A 280-amino-acid polypeptide reads, in one-letter code: Protein scylla (280 aa).

The interval 39–96 (LMSKKAKTTTGGSSNGSNATATSTTTSTSSSIKHKQPAGSSNNNVGQSQSKKTKPSGS) is disordered. Low complexity-rich tracts occupy residues 46–69 (TTTG…TSSS) and 77–96 (GSSN…PSGS).

Belongs to the DDIT4 family.

Its subcellular location is the cytoplasm. Functionally, inhibits cell growth by regulating the Tor pathway upstream of the Tsc1-Tsc2 complex and downstream of Akt1. Acts as a cell death activator during head development. In Drosophila melanogaster (Fruit fly), this protein is Protein scylla (scyl).